The primary structure comprises 401 residues: Mu-type opioid receptor (401 aa).

The Extracellular segment spans residues methionine 1–isoleucine 69. N-linked (GlcNAc...) asparagine glycans are attached at residues asparagine 9, asparagine 12, asparagine 34, asparagine 41, and asparagine 49. A helical transmembrane segment spans residues threonine 70–tyrosine 94. Over valine 95–asparagine 107 the chain is Cytoplasmic. Residues isoleucine 108–leucine 132 form a helical membrane-spanning segment. Residues methionine 133–cysteine 143 are Extracellular-facing. A disulfide bridge links cysteine 143 with cysteine 220. A helical transmembrane segment spans residues lysine 144–valine 166. The Cytoplasmic portion of the chain corresponds to aspartate 167–asparagine 186. At tyrosine 169 the chain carries Phosphotyrosine. A helical transmembrane segment spans residues alanine 187–methionine 208. Residues alanine 209 to tryptophan 231 lie on the Extracellular side of the membrane. The chain crosses the membrane as a helical span at residues glutamate 232–glycine 256. Over leucine 257 to arginine 280 the chain is Cytoplasmic. A helical transmembrane segment spans residues isoleucine 281–alanine 307. Over leucine 308–threonine 315 the chain is Extracellular. A helical transmembrane segment spans residues phenylalanine 316–tyrosine 339. The NPxxY; plays a role in stabilizing the activated conformation of the receptor signature appears at asparagine 335 to tyrosine 339. Residues alanine 340–proline 401 lie on the Cytoplasmic side of the membrane. Residue cysteine 354 is the site of S-palmitoyl cysteine attachment. Residues asparagine 365–histidine 388 form a disordered region. Serine 366 is modified (phosphoserine). Threonine 373 carries the phosphothreonine modification. Serine 378 carries the post-translational modification Phosphoserine. Threonine 397 bears the Phosphothreonine mark.

The protein belongs to the G-protein coupled receptor 1 family. As to quaternary structure, forms homooligomers and heterooligomers with other GPCRs, such as OPRD1, OPRK1, OPRL1, NPFFR2, ADRA2A, SSTR2, CNR1 and CCR5 (probably in dimeric forms). Interacts with heterotrimeric G proteins; interaction with a heterotrimeric complex containing GNAI1, GNB1 and GNG2 stabilizes the active conformation of the receptor and increases its affinity for endomorphin-2, the synthetic opioid peptide DAMGO and for morphinan agonists. Interacts with PPL; the interaction disrupts agonist-mediated G-protein activation. Interacts (via C-terminus) with DNAJB4 (via C-terminus). Interacts with calmodulin; the interaction inhibits the constitutive activity of OPRM1; it abolishes basal and attenuates agonist-stimulated G-protein coupling. Interacts with FLNA, PLD2, RANBP9 and WLS and GPM6A. Interacts with RTP4. Interacts with SYP and GNAS. Interacts with RGS9, RGS17, RGS20, RGS4, PPP1R9B and HINT1. Phosphorylated. Differentially phosphorylated in basal and agonist-induced conditions. Agonist-mediated phosphorylation modulates receptor internalization. Phosphorylated by GRK2 in a agonist-dependent manner. Phosphorylation at Tyr-169 requires receptor activation, is dependent on non-receptor protein tyrosine kinase Src and results in a decrease in agonist efficacy by reducing G-protein coupling efficiency. Phosphorylated on tyrosine residues; the phosphorylation is involved in agonist-induced G-protein-independent receptor down-regulation. Phosphorylation at Ser-378 is involved in G-protein-dependent but not beta-arrestin-dependent activation of the ERK pathway. In terms of processing, ubiquitinated. A basal ubiquitination seems not to be related to degradation. Ubiquitination is increased upon formation of OPRM1:OPRD1 oligomers leading to proteasomal degradation; the ubiquitination is diminished by RTP4.

The protein localises to the cell membrane. It is found in the cell projection. Its subcellular location is the axon. The protein resides in the perikaryon. It localises to the dendrite. The protein localises to the endosome. Its function is as follows. Receptor for endogenous opioids such as beta-endorphin and endomorphin. Receptor for natural and synthetic opioids including morphine, heroin, DAMGO, fentanyl, etorphine, buprenorphin and methadone. Also activated by enkephalin peptides, such as Met-enkephalin or Met-enkephalin-Arg-Phe, with higher affinity for Met-enkephalin-Arg-Phe. Agonist binding to the receptor induces coupling to an inactive GDP-bound heterotrimeric G-protein complex and subsequent exchange of GDP for GTP in the G-protein alpha subunit leading to dissociation of the G-protein complex with the free GTP-bound G-protein alpha and the G-protein beta-gamma dimer activating downstream cellular effectors. The agonist- and cell type-specific activity is predominantly coupled to pertussis toxin-sensitive G(i) and G(o) G alpha proteins, GNAI1, GNAI2, GNAI3 and GNAO1, and to a lesser extent to pertussis toxin-insensitive G alpha proteins GNAZ and GNA15. They mediate an array of downstream cellular responses, including inhibition of adenylate cyclase activity and both N-type and L-type calcium channels, activation of inward rectifying potassium channels, mitogen-activated protein kinase (MAPK), phospholipase C (PLC), phosphoinositide/protein kinase (PKC), phosphoinositide 3-kinase (PI3K) and regulation of NF-kappa-B. Also couples to adenylate cyclase stimulatory G alpha proteins. The selective temporal coupling to G-proteins and subsequent signaling can be regulated by RGSZ proteins, such as RGS9, RGS17 and RGS4. Phosphorylation by members of the GPRK subfamily of Ser/Thr protein kinases and association with beta-arrestins is involved in short-term receptor desensitization. Beta-arrestins associate with the GPRK-phosphorylated receptor and uncouple it from the G-protein thus terminating signal transduction. The phosphorylated receptor is internalized through endocytosis via clathrin-coated pits which involves beta-arrestins. The activation of the ERK pathway occurs either in a G-protein-dependent or a beta-arrestin-dependent manner and is regulated by agonist-specific receptor phosphorylation. Acts as a class A G-protein coupled receptor (GPCR) which dissociates from beta-arrestin at or near the plasma membrane and undergoes rapid recycling. Receptor down-regulation pathways are varying with the agonist and occur dependent or independent of G-protein coupling. Endogenous ligands induce rapid desensitization, endocytosis and recycling. Heterooligomerization with other GPCRs can modulate agonist binding, signaling and trafficking properties. Involved in neurogenesis. The protein is Mu-type opioid receptor (OPRM1) of Pan troglodytes (Chimpanzee).